Reading from the N-terminus, the 141-residue chain is Large ribosomal subunit protein uL11 (141 aa).

This sequence belongs to the universal ribosomal protein uL11 family. As to quaternary structure, part of the ribosomal stalk of the 50S ribosomal subunit. Interacts with L10 and the large rRNA to form the base of the stalk. L10 forms an elongated spine to which L12 dimers bind in a sequential fashion forming a multimeric L10(L12)X complex. Post-translationally, one or more lysine residues are methylated.

In terms of biological role, forms part of the ribosomal stalk which helps the ribosome interact with GTP-bound translation factors. The protein is Large ribosomal subunit protein uL11 of Prochlorococcus marinus (strain MIT 9215).